Reading from the N-terminus, the 201-residue chain is Small ribosomal subunit protein uS4c (201 aa).

Residues 20–43 (GLTNKRPKSRNDPTNQSSSRKISQ) are disordered. Residues 31–41 (DPTNQSSSRKI) are compositionally biased toward polar residues. Residues 89–157 (MRLDNIIFRL…IGKNLDLSQK (69 aa)) enclose the S4 RNA-binding domain.

Belongs to the universal ribosomal protein uS4 family. Part of the 30S ribosomal subunit. Contacts protein S5. The interaction surface between S4 and S5 is involved in control of translational fidelity.

Its subcellular location is the plastid. The protein resides in the chloroplast. One of the primary rRNA binding proteins, it binds directly to 16S rRNA where it nucleates assembly of the body of the 30S subunit. Functionally, with S5 and S12 plays an important role in translational accuracy. The polypeptide is Small ribosomal subunit protein uS4c (rps4) (Cycas taitungensis (Prince sago)).